A 94-amino-acid chain; its full sequence is Acylphosphatase (94 aa).

One can recognise an Acylphosphatase-like domain in the interval 8–94 (RLTAWVHGRV…REQITGFHER (87 aa)). Residues Arg23 and Asn41 contribute to the active site.

The protein belongs to the acylphosphatase family.

The catalysed reaction is an acyl phosphate + H2O = a carboxylate + phosphate + H(+). This is Acylphosphatase (acyP) from Mycobacterium sp. (strain KMS).